We begin with the raw amino-acid sequence, 500 residues long: Protein nucleotidyltransferase YdiU (500 aa).

ATP-binding residues include Gly96, Gly98, Arg99, Lys119, Asp131, Gly132, Arg182, and Arg189. Asp258 (proton acceptor) is an active-site residue. 2 residues coordinate Mg(2+): Asn259 and Asp268. Asp268 contributes to the ATP binding site.

The protein belongs to the SELO family. Requires Mg(2+) as cofactor. The cofactor is Mn(2+).

The enzyme catalyses L-seryl-[protein] + ATP = 3-O-(5'-adenylyl)-L-seryl-[protein] + diphosphate. The catalysed reaction is L-threonyl-[protein] + ATP = 3-O-(5'-adenylyl)-L-threonyl-[protein] + diphosphate. It catalyses the reaction L-tyrosyl-[protein] + ATP = O-(5'-adenylyl)-L-tyrosyl-[protein] + diphosphate. It carries out the reaction L-histidyl-[protein] + UTP = N(tele)-(5'-uridylyl)-L-histidyl-[protein] + diphosphate. The enzyme catalyses L-seryl-[protein] + UTP = O-(5'-uridylyl)-L-seryl-[protein] + diphosphate. The catalysed reaction is L-tyrosyl-[protein] + UTP = O-(5'-uridylyl)-L-tyrosyl-[protein] + diphosphate. In terms of biological role, nucleotidyltransferase involved in the post-translational modification of proteins. It can catalyze the addition of adenosine monophosphate (AMP) or uridine monophosphate (UMP) to a protein, resulting in modifications known as AMPylation and UMPylation. The polypeptide is Protein nucleotidyltransferase YdiU (Rhizobium etli (strain ATCC 51251 / DSM 11541 / JCM 21823 / NBRC 15573 / CFN 42)).